The primary structure comprises 154 residues: 6,7-dimethyl-8-ribityllumazine synthase (154 aa).

5-amino-6-(D-ribitylamino)uracil contacts are provided by residues phenylalanine 26, 60–62, and 84–86; these read ALE and CII. 89–90 lines the (2S)-2-hydroxy-3-oxobutyl phosphate pocket; that stretch reads ET. Residue histidine 92 is the Proton donor of the active site. Residue asparagine 117 participates in 5-amino-6-(D-ribitylamino)uracil binding. Arginine 131 contributes to the (2S)-2-hydroxy-3-oxobutyl phosphate binding site.

It belongs to the DMRL synthase family.

It catalyses the reaction (2S)-2-hydroxy-3-oxobutyl phosphate + 5-amino-6-(D-ribitylamino)uracil = 6,7-dimethyl-8-(1-D-ribityl)lumazine + phosphate + 2 H2O + H(+). It participates in cofactor biosynthesis; riboflavin biosynthesis; riboflavin from 2-hydroxy-3-oxobutyl phosphate and 5-amino-6-(D-ribitylamino)uracil: step 1/2. Its function is as follows. Catalyzes the formation of 6,7-dimethyl-8-ribityllumazine by condensation of 5-amino-6-(D-ribitylamino)uracil with 3,4-dihydroxy-2-butanone 4-phosphate. This is the penultimate step in the biosynthesis of riboflavin. This chain is 6,7-dimethyl-8-ribityllumazine synthase, found in Polaromonas sp. (strain JS666 / ATCC BAA-500).